Reading from the N-terminus, the 281-residue chain is 4-diphosphocytidyl-2-C-methyl-D-erythritol kinase (281 aa).

The active site involves lysine 11. 92-102 (LVSAGLAGGSA) lines the ATP pocket. Residue aspartate 132 is part of the active site.

It belongs to the GHMP kinase family. IspE subfamily.

It carries out the reaction 4-CDP-2-C-methyl-D-erythritol + ATP = 4-CDP-2-C-methyl-D-erythritol 2-phosphate + ADP + H(+). The protein operates within isoprenoid biosynthesis; isopentenyl diphosphate biosynthesis via DXP pathway; isopentenyl diphosphate from 1-deoxy-D-xylulose 5-phosphate: step 3/6. Catalyzes the phosphorylation of the position 2 hydroxy group of 4-diphosphocytidyl-2C-methyl-D-erythritol. The polypeptide is 4-diphosphocytidyl-2-C-methyl-D-erythritol kinase (Ehrlichia ruminantium (strain Welgevonden)).